A 331-amino-acid polypeptide reads, in one-letter code: Ornithine carbamoyltransferase (331 aa).

Carbamoyl phosphate contacts are provided by residues Ser-55–Thr-58, Gln-82, Arg-106, and His-133–Gln-136. L-ornithine contacts are provided by residues Asn-166, Asp-230, and Ser-234–Met-235. Residues Cys-272–Leu-273 and Arg-317 contribute to the carbamoyl phosphate site.

Belongs to the aspartate/ornithine carbamoyltransferase superfamily. OTCase family.

It is found in the cytoplasm. It catalyses the reaction carbamoyl phosphate + L-ornithine = L-citrulline + phosphate + H(+). It functions in the pathway amino-acid biosynthesis; L-arginine biosynthesis; L-arginine from L-ornithine and carbamoyl phosphate: step 1/3. Its function is as follows. Reversibly catalyzes the transfer of the carbamoyl group from carbamoyl phosphate (CP) to the N(epsilon) atom of ornithine (ORN) to produce L-citrulline. This is Ornithine carbamoyltransferase (argF) from Neisseria meningitidis serogroup B (strain ATCC BAA-335 / MC58).